The following is a 478-amino-acid chain: Probable cytosolic Fe-S cluster assembly factor AAEL012261 (478 aa).

[4Fe-4S] cluster is bound by residues Cys23, Cys69, Cys72, Cys75, Cys189, Cys245, Cys396, and Cys400.

The protein belongs to the NARF family.

Functionally, component of the cytosolic iron-sulfur (Fe/S) protein assembly machinery. Required for maturation of extramitochondrial Fe/S proteins. The protein is Probable cytosolic Fe-S cluster assembly factor AAEL012261 of Aedes aegypti (Yellowfever mosquito).